The following is a 157-amino-acid chain: Probable succinate transporter subunit YjjB (157 aa).

4 helical membrane passes run 8 to 28 (LALA…AMVF), 50 to 70 (MILM…SMLV), 87 to 107 (VFTV…TAMI), and 129 to 149 (FLTA…PGLW).

The protein belongs to the ThrE exporter (TC 2.A.79) family. In terms of assembly, the transporter is composed of YjjB and YjjP.

It localises to the cell inner membrane. Its function is as follows. Involved in succinate export with YjjP. Both proteins are required for export. The polypeptide is Probable succinate transporter subunit YjjB (Escherichia coli O127:H6 (strain E2348/69 / EPEC)).